We begin with the raw amino-acid sequence, 395 residues long: Zinc-regulated GTPase metalloprotein activator 1F (395 aa).

The interval 1-22 is disordered; it reads MLPAVGSVDEEEDPAEEDCPEL. A compositionally biased stretch (acidic residues) spans 8–20; sequence VDEEEDPAEEDCP. The psi-PxLVp motif signature appears at 17-24; that stretch reads EDCPELVP. 49 to 56 serves as a coordination point for GTP; it reads GYLGAGKT. Residues C107, C109, and C110 each coordinate Zn(2+). The CXCC motif signature appears at 107-110; it reads CLCC. Residues 110–114 and 203–206 contribute to the GTP site; these read CSVKD and NKTD. The region spanning 274–377 is the CobW C-terminal domain; it reads IVTITFDVPG…ILKQLFIATV (104 aa).

It belongs to the SIMIBI class G3E GTPase family. ZNG1 subfamily.

It localises to the nucleus. It catalyses the reaction GTP + H2O = GDP + phosphate + H(+). In terms of biological role, zinc chaperone that directly transfers zinc cofactor to target metalloproteins, thereby activating them. Catalyzes zinc insertion into the active site of methionine aminopeptidase METAP1, which function to cleave the initiator methionine from polypeptides during or after protein translation. Mechanistically, the N-terminal psi-PxLVp motif binds to the C6H2-type zinc finger of inactive form of METAP1. After formation of the docked complex, zinc is transferred from the CXCC motif in the GTPase domain of ZNG1F to the zinc binding site in the peptidase domain of METAP1 in a process requiring GTP hydrolysis. GTP/GDP exchange is required for release of active METAP1. This Homo sapiens (Human) protein is Zinc-regulated GTPase metalloprotein activator 1F.